A 434-amino-acid polypeptide reads, in one-letter code: UPF0597 protein CLI_2075 (434 aa).

The protein belongs to the UPF0597 family.

In Clostridium botulinum (strain Langeland / NCTC 10281 / Type F), this protein is UPF0597 protein CLI_2075.